A 278-amino-acid chain; its full sequence is Sulfur carrier protein FdhD (278 aa).

Residue cysteine 121 is the Cysteine persulfide intermediate of the active site. Phenylalanine 260–arginine 265 contacts Mo-bis(molybdopterin guanine dinucleotide).

It belongs to the FdhD family.

It is found in the cytoplasm. Required for formate dehydrogenase (FDH) activity. Acts as a sulfur carrier protein that transfers sulfur from IscS to the molybdenum cofactor prior to its insertion into FDH. In Salmonella schwarzengrund (strain CVM19633), this protein is Sulfur carrier protein FdhD.